We begin with the raw amino-acid sequence, 186 residues long: Ribosome-recycling factor (186 aa).

Belongs to the RRF family.

It localises to the cytoplasm. In terms of biological role, responsible for the release of ribosomes from messenger RNA at the termination of protein biosynthesis. May increase the efficiency of translation by recycling ribosomes from one round of translation to another. The polypeptide is Ribosome-recycling factor (Herminiimonas arsenicoxydans).